Reading from the N-terminus, the 135-residue chain is Fatty acid-binding protein 5 (135 aa).

Residue alanine 2 is modified to N-acetylalanine. Residue serine 3 is modified to Phosphoserine. The Nuclear localization signal motif lies at 24 to 34 (KELGVGLALRK). N-eicosanoyl ethanolamine-binding residues include cysteine 43 and arginine 109. A disulfide bridge connects residues cysteine 120 and cysteine 127. Position 129 to 131 (129 to 131 (RVY)) interacts with (9Z,12Z)-octadecadienoate. Tyrosine 131 contributes to the N-eicosanoyl ethanolamine binding site. Hexadecanoate is bound at residue tyrosine 131. Tyrosine 131 is modified (phosphotyrosine).

This sequence belongs to the calycin superfamily. Fatty-acid binding protein (FABP) family. As to quaternary structure, monomer.

The protein localises to the cytoplasm. The protein resides in the nucleus. It is found in the synapse. It localises to the postsynaptic density. Its subcellular location is the secreted. The catalysed reaction is hexadecanoate(out) = hexadecanoate(in). The enzyme catalyses (9Z,12Z)-octadecadienoate(out) = (9Z,12Z)-octadecadienoate(in). It catalyses the reaction (9Z)-octadecenoate(out) = (9Z)-octadecenoate(in). Its function is as follows. Intracellular carrier for long-chain fatty acids and related active lipids, such as endocannabinoids, that regulate the metabolism and actions of the ligands they bind. In addition to the cytosolic transport, selectively delivers specific fatty acids from the cytosol to the nucleus, wherein they activate nuclear receptors. Delivers retinoic acid to the nuclear receptor peroxisome proliferator-activated receptor delta; which promotes proliferation and survival. May also serve as a synaptic carrier of endocannabinoid at central synapses and thus controls retrograde endocannabinoid signaling. Modulates inflammation by regulating PTGES induction via NF-kappa-B activation, and prostaglandin E2 (PGE2) biosynthesis during inflammation. The chain is Fatty acid-binding protein 5 from Rattus norvegicus (Rat).